The following is a 455-amino-acid chain: Golgi pH regulator A (455 aa).

A run of 5 helical transmembrane segments spans residues 5–25 (IDSSIMITSQILFFGFGWLFF), 46–66 (VTFAFSCTMFELIIFEILGVL), 79–99 (LCVILLILVFMVPFYIGYFIV), 114–134 (CLLWLTFMYFFWKLGDPFPIL), and 150–170 (VGVIGVTLMALLSGFGAVNCP). 2 N-linked (GlcNAc...) asparagine glycosylation sites follow: Asn-180 and Asn-243. Transmembrane regions (helical) follow at residues 290–310 (GYFFSIYCVWKIFMATINIVF), 343–363 (ISFILVGIIIVTSIRGLLITL), 378–398 (VIVLLLAQIMGMYFVSSVLLI), and 425–445 (WFDVIFLVSALSSILFLYLAH).

Belongs to the Golgi pH regulator (TC 1.A.38) family. As to quaternary structure, homotrimer. Interacts with RABL3; the interaction stabilizes GPR89A. In terms of tissue distribution, ubiquitous.

The protein localises to the golgi apparatus membrane. The catalysed reaction is iodide(out) = iodide(in). It catalyses the reaction chloride(in) = chloride(out). The enzyme catalyses bromide(in) = bromide(out). It carries out the reaction fluoride(in) = fluoride(out). In terms of biological role, voltage-gated channel that enables the transfer of monoatomic anions such as iodide, chloride, bromide and fluoride which may function in counter-ion conductance and participates in Golgi acidification. Plays a role in lymphocyte development, probably by acting as a RABL3 effector in hematopoietic cells. The polypeptide is Golgi pH regulator A (Homo sapiens (Human)).